Consider the following 471-residue polypeptide: UDP-N-acetylmuramate--L-alanine ligase (471 aa).

Residue 125-131 (GTHGKTT) participates in ATP binding.

This sequence belongs to the MurCDEF family.

The protein localises to the cytoplasm. The catalysed reaction is UDP-N-acetyl-alpha-D-muramate + L-alanine + ATP = UDP-N-acetyl-alpha-D-muramoyl-L-alanine + ADP + phosphate + H(+). The protein operates within cell wall biogenesis; peptidoglycan biosynthesis. In terms of biological role, cell wall formation. This is UDP-N-acetylmuramate--L-alanine ligase from Kineococcus radiotolerans (strain ATCC BAA-149 / DSM 14245 / SRS30216).